Here is a 231-residue protein sequence, read N- to C-terminus: Large ribosomal subunit protein uL1 (231 aa).

It belongs to the universal ribosomal protein uL1 family. As to quaternary structure, part of the 50S ribosomal subunit.

Binds directly to 23S rRNA. The L1 stalk is quite mobile in the ribosome, and is involved in E site tRNA release. Functionally, protein L1 is also a translational repressor protein, it controls the translation of the L11 operon by binding to its mRNA. This chain is Large ribosomal subunit protein uL1, found in Acinetobacter baumannii (strain AB0057).